The sequence spans 152 residues: Ribosome maturation factor RimP (152 aa).

It belongs to the RimP family.

The protein resides in the cytoplasm. Its function is as follows. Required for maturation of 30S ribosomal subunits. In Porphyromonas gingivalis (strain ATCC BAA-308 / W83), this protein is Ribosome maturation factor RimP.